A 410-amino-acid chain; its full sequence is Multifunctional CCA protein (410 aa).

Residues Gly-8 and Arg-11 each contribute to the ATP site. CTP is bound by residues Gly-8 and Arg-11. Residues Asp-21 and Asp-23 each contribute to the Mg(2+) site. ATP is bound by residues Arg-91, Arg-137, and Arg-140. CTP is bound by residues Arg-91, Arg-137, and Arg-140. An HD domain is found at 228-329 (TGVHVLSVLQ…LELLQSFDVY (102 aa)).

It belongs to the tRNA nucleotidyltransferase/poly(A) polymerase family. Bacterial CCA-adding enzyme type 1 subfamily. Monomer. Can also form homodimers and oligomers. It depends on Mg(2+) as a cofactor. Ni(2+) serves as cofactor.

The catalysed reaction is a tRNA precursor + 2 CTP + ATP = a tRNA with a 3' CCA end + 3 diphosphate. It catalyses the reaction a tRNA with a 3' CCA end + 2 CTP + ATP = a tRNA with a 3' CCACCA end + 3 diphosphate. Functionally, catalyzes the addition and repair of the essential 3'-terminal CCA sequence in tRNAs without using a nucleic acid template. Adds these three nucleotides in the order of C, C, and A to the tRNA nucleotide-73, using CTP and ATP as substrates and producing inorganic pyrophosphate. tRNA 3'-terminal CCA addition is required both for tRNA processing and repair. Also involved in tRNA surveillance by mediating tandem CCA addition to generate a CCACCA at the 3' terminus of unstable tRNAs. While stable tRNAs receive only 3'-terminal CCA, unstable tRNAs are marked with CCACCA and rapidly degraded. The protein is Multifunctional CCA protein of Pseudomonas aeruginosa (strain LESB58).